The primary structure comprises 308 residues: Aspartate carbamoyltransferase catalytic subunit (308 aa).

The carbamoyl phosphate site is built by Arg58 and Thr59. Lys86 is a binding site for L-aspartate. Positions 108, 136, and 139 each coordinate carbamoyl phosphate. The L-aspartate site is built by Arg169 and Arg227. Carbamoyl phosphate-binding residues include Gly268 and Pro269.

The protein belongs to the aspartate/ornithine carbamoyltransferase superfamily. ATCase family. In terms of assembly, heterododecamer (2C3:3R2) of six catalytic PyrB chains organized as two trimers (C3), and six regulatory PyrI chains organized as three dimers (R2).

The catalysed reaction is carbamoyl phosphate + L-aspartate = N-carbamoyl-L-aspartate + phosphate + H(+). It participates in pyrimidine metabolism; UMP biosynthesis via de novo pathway; (S)-dihydroorotate from bicarbonate: step 2/3. Catalyzes the condensation of carbamoyl phosphate and aspartate to form carbamoyl aspartate and inorganic phosphate, the committed step in the de novo pyrimidine nucleotide biosynthesis pathway. This Chloroflexus aggregans (strain MD-66 / DSM 9485) protein is Aspartate carbamoyltransferase catalytic subunit.